The chain runs to 875 residues: Alanine--tRNA ligase (875 aa).

Positions 565, 569, 666, and 670 each coordinate Zn(2+).

This sequence belongs to the class-II aminoacyl-tRNA synthetase family. It depends on Zn(2+) as a cofactor.

Its subcellular location is the cytoplasm. It catalyses the reaction tRNA(Ala) + L-alanine + ATP = L-alanyl-tRNA(Ala) + AMP + diphosphate. Its function is as follows. Catalyzes the attachment of alanine to tRNA(Ala) in a two-step reaction: alanine is first activated by ATP to form Ala-AMP and then transferred to the acceptor end of tRNA(Ala). Also edits incorrectly charged Ser-tRNA(Ala) and Gly-tRNA(Ala) via its editing domain. This Leptothrix cholodnii (strain ATCC 51168 / LMG 8142 / SP-6) (Leptothrix discophora (strain SP-6)) protein is Alanine--tRNA ligase.